The primary structure comprises 439 residues: Secreted RxLR effector protein 117 (439 aa).

The N-terminal stretch at 1-21 is a signal peptide; it reads MRGAYYVLAALLVVASSQIAA. The RxLR-dEER signature appears at 48–65; that stretch reads RYLRGGHDVHDDSANEER.

This sequence belongs to the RxLR effector family.

It localises to the secreted. It is found in the host nucleus. Secreted effector that acts as an elicitor that induces cell death in host plant cells. In Plasmopara viticola (Downy mildew of grapevine), this protein is Secreted RxLR effector protein 117.